The chain runs to 296 residues: Protoheme IX farnesyltransferase (296 aa).

The Cytoplasmic portion of the chain corresponds to 1–9 (MMFKQYLQV). A helical transmembrane segment spans residues 10–28 (TKPGIIFGNLISVIGGFLL). At 29-37 (ASKGSIDYP) the chain is on the periplasmic side. A helical membrane pass occupies residues 38-56 (LFIYTLVGVSLVVASGCVF). At 57-78 (NNYIDRDIDRKMERTKNRVLVK) the chain is on the cytoplasmic side. The chain crosses the membrane as a helical span at residues 79–97 (GLISPGVSLVYATLLGIAG). At 98-107 (FMLLWFGANP) the chain is on the periplasmic side. Residues 108 to 126 (LACWLGVMGFVVYVGVYSL) traverse the membrane as a helical segment. Over 127-197 (YMKRHSVYGT…YQAANIPVLP (71 aa)) the chain is Cytoplasmic. The helical transmembrane segment at 198–216 (VIKGISVAKNHITLYIIAF) threads the bilayer. Over 217–228 (AVATLMLTLGGY) the chain is Periplasmic. Residues 229–247 (AGYKYLVVAAAVSVWWLGM) traverse the membrane as a helical segment. Over 248 to 268 (ALRGYKVEDDKVWARKLFGFS) the chain is Cytoplasmic. Residues 269-287 (IIAITALSIMMSVDFMVPN) traverse the membrane as a helical segment. The Periplasmic segment spans residues 288-296 (SQNLLTYVW).

Belongs to the UbiA prenyltransferase family. Protoheme IX farnesyltransferase subfamily.

Its subcellular location is the cell inner membrane. The enzyme catalyses heme b + (2E,6E)-farnesyl diphosphate + H2O = Fe(II)-heme o + diphosphate. The protein operates within porphyrin-containing compound metabolism; heme O biosynthesis; heme O from protoheme: step 1/1. In terms of biological role, converts heme B (protoheme IX) to heme O by substitution of the vinyl group on carbon 2 of heme B porphyrin ring with a hydroxyethyl farnesyl side group. The protein is Protoheme IX farnesyltransferase of Salmonella typhi.